A 1165-amino-acid chain; its full sequence is Pesticidal crystal protein Cry1Da (1165 aa).

The protein belongs to the delta endotoxin family.

Promotes colloidosmotic lysis by binding to the midgut epithelial cells of many lepidopteran larvae. This Bacillus thuringiensis subsp. aizawai protein is Pesticidal crystal protein Cry1Da (cry1Da).